Here is a 1865-residue protein sequence, read N- to C-terminus: Transient receptor potential cation channel subfamily M member 7 (1865 aa).

The residue at position 1 (Met-1) is an N-acetylmethionine. Over 1-850 (MSQKSWIEST…ITRKFYAFYH (850 aa)) the chain is Cytoplasmic. Residue Ser-101 is modified to Phosphoserine. Positions 544 to 555 (NRRSGRNTSSST) are enriched in low complexity. The tract at residues 544-575 (NRRSGRNTSSSTPQLRKSHESFGNRADKKEKM) is disordered. Over residues 560–573 (KSHESFGNRADKKE) the composition is skewed to basic and acidic residues. Residues 851-876 (APIVKFWFNTLAYLGFLMLYTFVVLV) traverse the membrane as a helical segment. The Extracellular segment spans residues 877 to 882 (QMEQLP). The chain crosses the membrane as a helical span at residues 883-904 (SVQEWIVIAYIFTYAIEKVREI). The Cytoplasmic portion of the chain corresponds to 905–923 (FMSEAGKVNQKIKVWFSDY). Residues 924 to 943 (FNISDTIAIISFFIGFGLRF) traverse the membrane as a helical segment. The Extracellular segment spans residues 944 to 956 (GAKWNFANAYDNH). The chain crosses the membrane as a helical span at residues 957 to 980 (VFVAGRLIYCLNIIFWYVRLLDFL). Over 981–999 (AVNQQAGPYVMMIGKMVAN) the chain is Cytoplasmic. A helical transmembrane segment spans residues 1000–1023 (MFYIVVIMALVLLSFGVPRKAILY). Residues 1024–1025 (PH) lie on the Extracellular side of the membrane. The segment at residues 1026–1066 (EAPSWTLAKDIVFHPYWMIFGEVYAYEIDVCANDSVIPQIC) is an intramembrane region (pore-forming). The Extracellular portion of the chain corresponds to 1067–1069 (GPG). The chain crosses the membrane as a helical span at residues 1070-1098 (TWLTPFLQAVYLFVQYIIMVNLLIAFFNN). Over 1099–1865 (VYLQVKAISN…ESTNSVRLML (767 aa)) the chain is Cytoplasmic. 3 S-palmitoyl cysteine lipidation sites follow: Cys-1143, Cys-1144, and Cys-1146. Phosphothreonine; by autocatalysis is present on Thr-1163. Residues Ser-1191 and Ser-1193 each carry the phosphoserine; by autocatalysis modification. Residues 1198–1250 (RVTFERVEQMCIQIKEVGDRVNYIKRSLQSLDSQIGHLQDLSALTVDTLKTLT) adopt a coiled-coil conformation. Position 1224 is a phosphoserine (Ser-1224). Phosphoserine; by autocatalysis is present on residues Ser-1255 and Ser-1258. Position 1265 is a phosphothreonine; by autocatalysis (Thr-1265). Ser-1287 carries the post-translational modification Phosphoserine; by autocatalysis. Phosphoserine is present on Ser-1301. Position 1358 is a phosphoserine; by autocatalysis (Ser-1358). Phosphoserine is present on residues Ser-1361 and Ser-1386. Residues 1386-1398 (SSSTSIPHLSSPP) are compositionally biased toward low complexity. Positions 1386–1407 (SSSTSIPHLSSPPTKFFVSTPS) are disordered. Ser-1387 and Ser-1390 each carry phosphoserine; by autocatalysis. A phosphoserine mark is found at Ser-1395 and Ser-1396. Residue Ser-1404 is modified to Phosphoserine; by autocatalysis. Thr-1405 bears the Phosphothreonine; by autocatalysis mark. Ser-1407 bears the Phosphoserine; by autocatalysis mark. A Phosphothreonine; by autocatalysis modification is found at Thr-1435. Ser-1446 is subject to Phosphoserine; by autocatalysis. A Phosphothreonine; by autocatalysis modification is found at Thr-1455. 2 positions are modified to phosphoserine; by autocatalysis: Ser-1456 and Ser-1463. Thr-1467 is subject to Phosphothreonine. Phosphoserine; by autocatalysis is present on Ser-1468. Thr-1471 carries the post-translational modification Phosphothreonine; by autocatalysis. Phosphoserine; by autocatalysis is present on residues Ser-1476 and Ser-1477. Thr-1482 bears the Phosphothreonine; by autocatalysis mark. The interval 1492-1511 (HSKQAEKISRRPSTEDTHEV) is disordered. Phosphoserine; by autocatalysis is present on Ser-1493. Basic and acidic residues predominate over residues 1494–1511 (KQAEKISRRPSTEDTHEV). At Ser-1500 the chain carries Phosphoserine. Ser-1504 carries the post-translational modification Phosphoserine; by autocatalysis. Thr-1508 is modified (phosphothreonine; by autocatalysis). Ser-1513, Ser-1527, and Ser-1533 each carry phosphoserine; by autocatalysis. Positions 1524–1543 (DRPSNREMPSEEGTLNGLTS) are disordered. Phosphothreonine; by autocatalysis occurs at positions 1537 and 1542. Ser-1543 carries the post-translational modification Phosphoserine; by autocatalysis. Thr-1551 carries the phosphothreonine; by autocatalysis modification. 2 positions are modified to phosphoserine; by autocatalysis: Ser-1567 and Ser-1569. Thr-1583 is subject to Phosphothreonine; by autocatalysis. In terms of domain architecture, Alpha-type protein kinase spans 1594-1824 (ILNNSMSSWS…CCRKLKLPDL (231 aa)). Phosphoserine; by autocatalysis occurs at positions 1598 and 1615. 5 residues coordinate ADP: Gly-1621, Gly-1622, Leu-1623, Arg-1624, and Lys-1648. Ser-1660 carries the post-translational modification Phosphoserine; by autocatalysis. Thr-1685 bears the Phosphothreonine; by autocatalysis mark. Residues Glu-1720, Glu-1721, and Met-1723 each coordinate ADP. Residue His-1753 coordinates Zn(2+). The active-site Proton acceptor is the Asp-1767. Asp-1777 serves as a coordination point for ADP. Ser-1779 is subject to Phosphoserine; by autocatalysis. His-1810, Cys-1812, and Cys-1816 together coordinate Zn(2+). Phosphothreonine; by autocatalysis is present on Thr-1830. The disordered stretch occupies residues 1836 to 1865 (FPQDEPSDLNLQPGNSTKESESTNSVRLML). Positions 1844–1865 (LNLQPGNSTKESESTNSVRLML) are enriched in polar residues. Ser-1851 carries the post-translational modification Phosphoserine. The residue at position 1860 (Ser-1860) is a Phosphoserine; by autocatalysis.

This sequence in the C-terminal section; belongs to the protein kinase superfamily. Alpha-type protein kinase family. ALPK subfamily. The protein in the N-terminal section; belongs to the transient receptor (TC 1.A.4) family. LTrpC subfamily. TRPM7 sub-subfamily. In terms of assembly, homotetramer. Interacts with PLCB1. Forms heteromers with TRPM6; heteromeric channels are functionally different from the homomeric channels. The cofactor is Zn(2+). Palmitoylated; palmitoylation at Cys-1143, Cys-1144 and Cys-1146 promotes TRPM7 trafficking from the Golgi to the surface membrane. In terms of processing, autophosphorylated; autophosphorylation of C-terminus regulates TRPM7 kinase activity towards its substrates. Post-translationally, the C-terminal kinase domain can be cleaved from the channel segment in a cell-type-specific fashion. TRPM7 is cleaved by caspase-8, dissociating the kinase from the ion-conducting pore. The cleaved kinase fragments (M7CKs) can translocate to the cell nucleus and binds chromatin-remodeling complex proteins in a Zn(2+)-dependent manner to ultimately phosphorylate specific Ser/Thr residues of histones.

It localises to the cell membrane. The protein resides in the cytoplasmic vesicle membrane. It is found in the nucleus. It catalyses the reaction L-seryl-[protein] + ATP = O-phospho-L-seryl-[protein] + ADP + H(+). It carries out the reaction L-threonyl-[protein] + ATP = O-phospho-L-threonyl-[protein] + ADP + H(+). The catalysed reaction is Mg(2+)(in) = Mg(2+)(out). The enzyme catalyses Ca(2+)(in) = Ca(2+)(out). It catalyses the reaction Zn(2+)(in) = Zn(2+)(out). Channel displays constitutive activity. Channel activity is negatively regulated by cytosolic Mg(2+) and Mg-ATP. Channel activity is negatively regulated by low intracellular pH. Resting free cytosolic Mg(2+) and Mg-ATP concentrations seem to be sufficient to block native TRPM7 channel activity. TRPM7 channel activity is highly dependent on membrane levels of phosphatidylinositol 4,5 bisphosphate (PIP2). PIP2 hydrolysis negatively regulates TRPM7 channel activity. TRPM7 kinase activity does not affect channel activity. The kinase activity is controlled through the autophosphorylation of a serine/threonine-rich region located N-terminal to the catalytic domain. In terms of biological role, bifunctional protein that combines an ion channel with an intrinsic kinase domain, enabling it to modulate cellular functions either by conducting ions through the pore or by phosphorylating downstream proteins via its kinase domain. The channel is highly permeable to divalent cations, specifically calcium (Ca2+), magnesium (Mg2+) and zinc (Zn2+) and mediates their influx. Controls a wide range of biological processes such as Ca2(+), Mg(2+) and Zn(2+) homeostasis, vesicular Zn(2+) release channel and intracellular Ca(2+) signaling, embryonic development, immune responses, cell motility, proliferation and differentiation. The C-terminal alpha-kinase domain autophosphorylates cytoplasmic residues of TRPM7. In vivo, TRPM7 phosphorylates SMAD2, suggesting that TRPM7 kinase may play a role in activating SMAD signaling pathways. In vitro, TRPM7 kinase phosphorylates ANXA1 (annexin A1), myosin II isoforms and a variety of proteins with diverse cellular functions. Functionally, the cleaved channel exhibits substantially higher current and potentiates Fas receptor signaling. Its function is as follows. The C-terminal kinase domain can be cleaved from the channel segment in a cell-type-specific fashion. In immune cells, the TRPM7 kinase domain is clipped from the channel domain by caspases in response to Fas-receptor stimulation. The cleaved kinase fragments can translocate to the nucleus, and bind chromatin-remodeling complex proteins in a Zn(2+)-dependent manner to ultimately phosphorylate specific Ser/Thr residues of histones known to be functionally important for cell differentiation and embryonic development. This is Transient receptor potential cation channel subfamily M member 7 (TRPM7) from Homo sapiens (Human).